Consider the following 333-residue polypeptide: CRISPR-associated endonuclease Cas1 (333 aa).

Mn(2+)-binding residues include E162, H226, and E241.

The protein belongs to the CRISPR-associated endonuclease Cas1 family. In terms of assembly, homodimer, forms a heterotetramer with a Cas2 homodimer. Mg(2+) serves as cofactor. Requires Mn(2+) as cofactor.

Functionally, CRISPR (clustered regularly interspaced short palindromic repeat), is an adaptive immune system that provides protection against mobile genetic elements (viruses, transposable elements and conjugative plasmids). CRISPR clusters contain spacers, sequences complementary to antecedent mobile elements, and target invading nucleic acids. CRISPR clusters are transcribed and processed into CRISPR RNA (crRNA). Acts as a dsDNA endonuclease. Involved in the integration of spacer DNA into the CRISPR cassette. The chain is CRISPR-associated endonuclease Cas1 from Nanoarchaeum equitans (strain Kin4-M).